A 170-amino-acid polypeptide reads, in one-letter code: Photosystem I assembly protein Ycf3 (170 aa).

TPR repeat units lie at residues 35-68 (AFTHYRDGMSAQSEGEYAEALQNYYEAMRLEIDP), 72-105 (SYILYNIGLIHTSNGEHAKALEYYFQALERNSSL), and 120-153 (GEQAIEEGDPETCEVWFDQAADYWKKAISLAPSN).

Belongs to the Ycf3 family.

It localises to the plastid. It is found in the chloroplast thylakoid membrane. Essential for the assembly of the photosystem I (PSI) complex. May act as a chaperone-like factor to guide the assembly of the PSI subunits. The sequence is that of Photosystem I assembly protein Ycf3 from Anthoceros angustus (Hornwort).